A 770-amino-acid chain; its full sequence is Signal transducer and activator of transcription 3 (770 aa).

Residue Ala-2 is modified to N-acetylalanine. An N6-acetyllysine mark is found at Lys-49 and Lys-87. An Essential for nuclear import motif is present at residues 150 to 162; it reads DVRKRVQDLEQKM. The SH2 domain maps to 580–670; that stretch reads WNEGYIMGFI…DATNILVSPL (91 aa). Allysine; alternate is present on residues Lys-601, Lys-615, and Lys-631. N6-acetyllysine; alternate is present on residues Lys-601, Lys-615, and Lys-631. Tyr-640 carries the phosphotyrosine; by TYK2 modification. Position 685 is an allysine; alternate (Lys-685). The residue at position 685 (Lys-685) is an N6-acetyllysine; alternate. Tyr-705 bears the Phosphotyrosine; by FER and PTK6 mark. Lys-707 carries the post-translational modification N6-acetyllysine. At Thr-714 the chain carries Phosphothreonine. At Ser-727 the chain carries Phosphoserine; by DYRK2, NLK, NEK6, IRAK1, RPS6KA5, ZIPK/DAPK3 and PKC/PRKCE.

The protein belongs to the transcription factor STAT family. Forms a homodimer or a heterodimer with a related family member (at least STAT1). Component of a promoter-binding complex composed of STAT3, NFATC3 and NFATC4; complex formation is enhanced by calcineurin. Interacts with IL31RA, NCOA1, PELP1, SIPAR, SOCS7, STATIP1 and TMF1. Interacts with IL23R in presence of IL23. Interacts (via SH2 domain) with NLK. Interacts with ARL2BP; the interaction is enhanced by LIF and JAK1 expression. Interacts with KPNA4 and KPNA5; KPNA4 may be the primary mediator of nuclear import. Interacts with CAV2; the interaction is increased on insulin-induced tyrosine phosphorylation of CAV2 and leads to STAT3 activation. Interacts with ARL2BP; interaction is enhanced with ARL2. Interacts with NEK6. Binds to CDK9 when activated and nuclear. Interacts with BMX. Interacts with ZIPK/DAPK3. Interacts with PIAS3; the interaction occurs on stimulation by IL6, CNTF or OSM and inhibits the DNA binding activity of STAT3. In prostate cancer cells, interacts with PRKCE and promotes DNA binding activity of STAT3. Interacts with STMN3, antagonizing its microtubule-destabilizing activity. Interacts with the 'Lys-129' acetylated form of BIRC5/survivin. Interacts with FER. Interacts (via SH2 domain) with EIF2AK2/PKR (via the kinase catalytic domain). Interacts with FGFR4. Interacts with INPP5F; the interaction is independent of STAT3 Tyr-705 phosphorylation status. Interacts with OCIAD1 and OCIAD2. Interacts (unphosphorylated or phosphorylated at Ser-727) with PHB1. Interacts and may form heterodimers with NHLH1. Found in a complex with SLC39A6, SLC39A10 and with the 'Ser-727' phosphorylated form of STAT3 throughout mitosis. Interacts (when acetylated) with EP300 (via bromo domain); interaction takes place following STAT3 acetylation by EP300 and promotes enhanceosome assembly. Interacts (when acetylated) with BRD2 (via bromo domain); interaction promotes STAT3 recruitment to chromatin and T-helper Th17 cell differentiation. Interacts with FAM220A/SIPAR; the interaction occurs in both the nucleus and the cytoplasm, is enhanced by IL6 and promotes STAT3 dephosphorylation. Interacts in both unphosphorylated and phosphorylated forms with FAM220A but interacts preferentially in the phosphorylated form in the nucleus. Interacts with PTPN2; the interaction is promoted by FAM220A and leads to STAT3 dephosphorylation which negatively regulates STAT3 transcriptional activator activity. Post-translationally, activated through tyrosine phosphorylation by BMX. Tyrosine phosphorylated in response to IL-6, IL-11, CNTF, LIF, CSF-1, EGF, PDGF, IFN-alpha and OSM. Tyrosine phosphorylated in response to constitutively activated FGFR1, FGFR2, FGFR3 and FGFR4. Phosphorylated on serine upon DNA damage, probably by ATM or ATR. Serine phosphorylation is important for the formation of stable DNA-binding STAT3 homodimers and maximal transcriptional activity. ARL2BP may participate in keeping the phosphorylated state of STAT3 within the nucleus. Tyrosine phosphorylated upon stimulation with EGF. Upon LPS challenge, phosphorylated within the nucleus by IRAK1. Phosphorylated on Ser-727 by RPS6KA5. Dephosphorylation on tyrosine residues by PTPN2 negatively regulates IL6/interleukin-6 signaling. Phosphorylation at Tyr-705 by FER, isoform M2 of PKM (PKM2) or PTK6 leads to an increase of its transcriptional activity. Phosphorylation at Tyr-705 is increased in the presence of calcineurin. Phosphorylation at Tyr-640 by TYK2 negatively regulates transcriptional activity. In terms of processing, acetylated on lysine residues by EP300/p300, promoting its activation. Acetylation at Lys-49 and Lys-87 by EP300/p300 promotes its activation. Acetylation at Lys-87 by EP300/p300 promotes its association with BRD2 and recruitment to chromatin. Deacetylated at Lys-49 and Lys-87 by HDAC1. Acetylation at Lys-685 by EP300/p300 promotes its homodimerization and activation. Deacetylated at Lys-685 by HDAC3. Acetylated on lysine residues by CREBBP. Deacetylation by LOXL3 leads to disrupt STAT3 dimerization and inhibit STAT3 transcription activity. Oxidation of lysine residues to allysine on STAT3 preferentially takes place on lysine residues that are acetylated. Some lysine residues are oxidized to allysine by LOXL3, leading to disrupt STAT3 dimerization and inhibit STAT3 transcription activity. Oxidation of lysine residues to allysine on STAT3 preferentially takes place on lysine residues that are acetylated.

The protein localises to the cytoplasm. It is found in the nucleus. Functionally, signal transducer and transcription activator that mediates cellular responses to interleukins, KITLG/SCF, LEP and other growth factors. Once activated, recruits coactivators, such as NCOA1 or MED1, to the promoter region of the target gene. May mediate cellular responses to activated FGFR1, FGFR2, FGFR3 and FGFR4. Upon activation of IL6ST/gp130 signaling by interleukin-6 (IL6), binds to the IL6-responsive elements identified in the promoters of various acute-phase protein genes. Activated by IL31 through IL31RA. Acts as a regulator of inflammatory response by regulating differentiation of naive CD4(+) T-cells into T-helper Th17 or regulatory T-cells (Treg): acetylation promotes its transcription activity and cell differentiation while deacetylation and oxidation of lysine residues by LOXL3 inhibits differentiation. Involved in cell cycle regulation by inducing the expression of key genes for the progression from G1 to S phase, such as CCND1. Mediates the effects of LEP on melanocortin production, body energy homeostasis and lactation. May play an apoptotic role by transctivating BIRC5 expression under LEP activation. Cytoplasmic STAT3 represses macroautophagy by inhibiting EIF2AK2/PKR activity. Plays a crucial role in basal beta cell functions, such as regulation of insulin secretion. Following JAK/STAT signaling activation and as part of a complex with NFATC3 and NFATC4, binds to the alpha-beta E4 promoter region of CRYAB and activates transcription in cardiomyocytes. Plays an important role in host defense in methicillin-resistant S.aureus lung infection by regulating the expression of the antimicrobial lectin REG3G. In Bos taurus (Bovine), this protein is Signal transducer and activator of transcription 3 (STAT3).